The primary structure comprises 119 residues: Protein TusC (119 aa).

The protein belongs to the DsrF/TusC family. Heterohexamer, formed by a dimer of trimers. The hexameric TusBCD complex contains 2 copies each of TusB, TusC and TusD. The TusBCD complex interacts with TusE.

It localises to the cytoplasm. In terms of biological role, part of a sulfur-relay system required for 2-thiolation of 5-methylaminomethyl-2-thiouridine (mnm(5)s(2)U) at tRNA wobble positions. This chain is Protein TusC, found in Shigella flexneri serotype 5b (strain 8401).